The primary structure comprises 213 residues: mRNA-decapping protein OPG121 (213 aa).

N(7)-methyl-GTP is bound by residues E16 and R50. Positions 30–209 constitute a Nudix hydrolase domain; that stretch reads KDTHVFAACI…EYLSYIYNML (180 aa). The short motif at 111 to 132 is the Nudix box element; sequence GKLDKKESIKDCLRRELKEESD. E126 acts as the Nucleophile in catalysis. E126 and E130 together coordinate Mg(2+). D151 is a N(7)-methyl-GTP binding site. Mg(2+) is bound at residue E183.

The protein belongs to the Nudix hydrolase family. Requires Mg(2+) as cofactor. Mn(2+) serves as cofactor.

It catalyses the reaction a 5'-end (N(7)-methyl 5'-triphosphoguanosine)-guanosine in mRNA + H2O = a 5'-end phospho-guanosine in mRNA + N(7)-methyl-GDP + 2 H(+). Decapping enzyme that remove the protective 5'-cap from both host and viral mRNAs to commit transcripts for decay by the cellular exonuclease XRN1. Accelerates viral and cellular mRNA turnover to eliminate competing host mRNAs and allow stage-specific synthesis of viral proteins. Acceleration of the turnover of cellular transcripts may even promote the shutoff of host protein synthesis. The sequence is that of mRNA-decapping protein OPG121 (OPG121) from Vaccinia virus (strain Western Reserve) (VACV).